The primary structure comprises 579 residues: MSEKHKKIEELRSQRWFAPDTIRAFAHRQRLQQIGLRREEFMGKPVIAILNTWSEMSPCHSHLRDRAEAVKRGVWAAGGFPVELPVQSVGEVMVKPTTMLYRNLLAMEAEELLRSLPIDGAVLLGGCDKSTPGLLMGALSMDLPVIYCPAGPMSNGQWRGVKTGAGTHTKKYWDERRLGLIDTVAWEELEGAMTRSIGTCNTVGTASTMTSIADAMGFTLPGASSIPAADGAHPRMASQCGSAIVDLVWRDRRPSTWLTDKHVANGVAVYMAMGGSTNAAIHLIAIARRAGIDLTLDQLAAAAAKIPVLLNLFPSGTALMEDYHFAGGLRALMRKIEPHLHLECEGATGQSWDSLLADAPCYDDDIIRSLDNPVVSLEQGATLALLRGNLCPDGAVMKSSAAEPRLRRHSGPALVFDDHETLSRMIDDPALEVTADTVLILRNAGPVGAPGMPEWGNLPIPKRLLEAGVRDLLRISDSRMSGTHYGSCVLHVAPEAAVGGPLALVRTGDIIDLDVAAGTLNMRVSDDELARRRAGHVPQHKTYGRSFAALYQQHVTQANEGCDFDFLQAGEAVPEPPIH.

Cysteine 59, cysteine 127, and cysteine 200 together coordinate [4Fe-4S] cluster.

It belongs to the IlvD/Edd family. As to quaternary structure, homodimer. Requires [4Fe-4S] cluster as cofactor.

The catalysed reaction is 6-deoxy-6-sulfo-D-gluconate = 2-dehydro-3,6-dideoxy-6-sulfo-D-gluconate + H2O. Catalyzes the dehydration of 6-deoxy-6-sulfo-D-gluconate to 2-dehydro-3,6-dideoxy-6-sulfo-D-gluconate. Is involved in a degradation pathway of sulfoquinovose (SQ) that allows P.putida SQ1 to use SQ as the sole carbon and energy source for growth. The sequence is that of 6-deoxy-6-sulfo-D-gluconate dehydratase from Pseudomonas putida (Arthrobacter siderocapsulatus).